Here is a 113-residue protein sequence, read N- to C-terminus: Large ribosomal subunit protein uL22 (113 aa).

This sequence belongs to the universal ribosomal protein uL22 family. As to quaternary structure, part of the 50S ribosomal subunit.

Functionally, this protein binds specifically to 23S rRNA; its binding is stimulated by other ribosomal proteins, e.g. L4, L17, and L20. It is important during the early stages of 50S assembly. It makes multiple contacts with different domains of the 23S rRNA in the assembled 50S subunit and ribosome. In terms of biological role, the globular domain of the protein is located near the polypeptide exit tunnel on the outside of the subunit, while an extended beta-hairpin is found that lines the wall of the exit tunnel in the center of the 70S ribosome. The sequence is that of Large ribosomal subunit protein uL22 from Bacillus thuringiensis subsp. konkukian (strain 97-27).